A 560-amino-acid polypeptide reads, in one-letter code: Nucleoprotein (560 aa).

The binding site for the cap structure m7GTP stretch occupies residues 53-236 (MRKDKRTDTD…ITQEQSQINV (184 aa)). The interval 333 to 353 (LTDTGSPNHPPVRNGGSPRLS) is disordered. The Mn(2+) site is built by D379 and E381. E389, C496, H499, and C520 together coordinate Zn(2+). D524 contributes to the Mn(2+) binding site.

The protein belongs to the arenaviridae nucleocapsid protein family. In terms of assembly, homomultimerizes to form the nucleocapsid. Binds to viral genomic RNA. Interacts with glycoprotein G2. Interacts with protein Z; this interaction probably directs the encapsidated genome to budding sites. Interacts with protein L; this interaction does not interfere with Z-L interaction. Interacts with host IKBKE (via Protein kinase domain); the interaction inhibits IKBKE kinase activity.

The protein resides in the virion. Its subcellular location is the host cytoplasm. In terms of biological role, encapsidates the genome, protecting it from nucleases. The encapsidated genomic RNA is termed the nucleocapsid (NC). Serves as template for viral transcription and replication. The increased presence of protein N in host cell does not seem to trigger the switch from transcription to replication as observed in other negative strain RNA viruses. Through the interaction with host IKBKE, strongly inhibits the phosphorylation and nuclear translocation of host IRF3, a protein involved in interferon activation pathway, leading to the inhibition of interferon-beta and IRF3-dependent promoters activation. Also encodes a functional 3'-5' exoribonuclease that degrades preferentially dsRNA substrates and thereby participates in the suppression of interferon induction. The polypeptide is Nucleoprotein (Pirital mammarenavirus (isolate Rat/Venezuela/VAV-488/1995) (PIRV)).